A 282-amino-acid polypeptide reads, in one-letter code: Ribosomal RNA small subunit methyltransferase A (282 aa).

Residues asparagine 28, leucine 30, glycine 55, glutamate 77, aspartate 103, and asparagine 123 each coordinate S-adenosyl-L-methionine.

Belongs to the class I-like SAM-binding methyltransferase superfamily. rRNA adenine N(6)-methyltransferase family. RsmA subfamily.

The protein localises to the cytoplasm. It carries out the reaction adenosine(1518)/adenosine(1519) in 16S rRNA + 4 S-adenosyl-L-methionine = N(6)-dimethyladenosine(1518)/N(6)-dimethyladenosine(1519) in 16S rRNA + 4 S-adenosyl-L-homocysteine + 4 H(+). Its function is as follows. Specifically dimethylates two adjacent adenosines (A1518 and A1519) in the loop of a conserved hairpin near the 3'-end of 16S rRNA in the 30S particle. May play a critical role in biogenesis of 30S subunits. The protein is Ribosomal RNA small subunit methyltransferase A of Afipia carboxidovorans (strain ATCC 49405 / DSM 1227 / KCTC 32145 / OM5) (Oligotropha carboxidovorans).